A 223-amino-acid polypeptide reads, in one-letter code: Uridylate kinase (223 aa).

Residue 9 to 10 participates in ATP binding; sequence GS. Gly-42 provides a ligand contact to UMP. ATP is bound by residues Gly-43 and Arg-47. UMP is bound by residues Asp-64 and 112–118; that span reads VSPGQTT. ATP is bound by residues Thr-138, Tyr-144, and Asp-147.

Belongs to the UMP kinase family. In terms of assembly, homohexamer.

It is found in the cytoplasm. It catalyses the reaction UMP + ATP = UDP + ADP. It participates in pyrimidine metabolism; CTP biosynthesis via de novo pathway; UDP from UMP (UMPK route): step 1/1. With respect to regulation, inhibited by UTP. Functionally, catalyzes the reversible phosphorylation of UMP to UDP. The chain is Uridylate kinase from Methanothrix thermoacetophila (strain DSM 6194 / JCM 14653 / NBRC 101360 / PT) (Methanosaeta thermophila).